Consider the following 165-residue polypeptide: 2S seed storage protein 5 (165 aa).

Positions 1–20 (MAKLILVFATLALFILLANA) are cleaved as a signal peptide. 2 consecutive propeptides follow at residues 21 to 37 (SIYRTVVEFEEDDDVSN) and 71 to 89 (YEADDFELTLDVDLEDDEN).

It belongs to the 2S seed storage albumins family. In terms of assembly, the mature protein consists of a small and a large chain linked by disulfide bonds.

Functionally, this is a 2S seed storage protein. The polypeptide is 2S seed storage protein 5 (SESA5) (Arabidopsis thaliana (Mouse-ear cress)).